The chain runs to 283 residues: Pantothenate synthetase (283 aa).

30-37 lines the ATP pocket; it reads MGNLHAGH. His37 acts as the Proton donor in catalysis. Gln61 is a binding site for (R)-pantoate. Gln61 contacts beta-alanine. 149–152 provides a ligand contact to ATP; the sequence is GRKD. A (R)-pantoate-binding site is contributed by Gln155. An ATP-binding site is contributed by 186–189; sequence LSSR.

The protein belongs to the pantothenate synthetase family. In terms of assembly, homodimer.

The protein resides in the cytoplasm. The enzyme catalyses (R)-pantoate + beta-alanine + ATP = (R)-pantothenate + AMP + diphosphate + H(+). The protein operates within cofactor biosynthesis; (R)-pantothenate biosynthesis; (R)-pantothenate from (R)-pantoate and beta-alanine: step 1/1. Functionally, catalyzes the condensation of pantoate with beta-alanine in an ATP-dependent reaction via a pantoyl-adenylate intermediate. The chain is Pantothenate synthetase from Chromohalobacter salexigens (strain ATCC BAA-138 / DSM 3043 / CIP 106854 / NCIMB 13768 / 1H11).